The primary structure comprises 324 residues: Methionyl-tRNA formyltransferase (324 aa).

Residue 112-115 participates in (6S)-5,6,7,8-tetrahydrofolate binding; the sequence is SILP.

Belongs to the Fmt family.

It carries out the reaction L-methionyl-tRNA(fMet) + (6R)-10-formyltetrahydrofolate = N-formyl-L-methionyl-tRNA(fMet) + (6S)-5,6,7,8-tetrahydrofolate + H(+). Its function is as follows. Attaches a formyl group to the free amino group of methionyl-tRNA(fMet). The formyl group appears to play a dual role in the initiator identity of N-formylmethionyl-tRNA by promoting its recognition by IF2 and preventing the misappropriation of this tRNA by the elongation apparatus. This is Methionyl-tRNA formyltransferase from Shewanella loihica (strain ATCC BAA-1088 / PV-4).